Consider the following 360-residue polypeptide: Histidinol-phosphate aminotransferase (360 aa).

Residue lysine 222 is modified to N6-(pyridoxal phosphate)lysine.

Belongs to the class-II pyridoxal-phosphate-dependent aminotransferase family. Histidinol-phosphate aminotransferase subfamily. In terms of assembly, homodimer. The cofactor is pyridoxal 5'-phosphate.

The catalysed reaction is L-histidinol phosphate + 2-oxoglutarate = 3-(imidazol-4-yl)-2-oxopropyl phosphate + L-glutamate. It participates in amino-acid biosynthesis; L-histidine biosynthesis; L-histidine from 5-phospho-alpha-D-ribose 1-diphosphate: step 7/9. This is Histidinol-phosphate aminotransferase from Listeria monocytogenes serotype 4b (strain CLIP80459).